Reading from the N-terminus, the 161-residue chain is Regulator of ribonuclease activity A (161 aa).

The protein belongs to the RraA family. Homotrimer. Binds to both RNA-binding sites in the C-terminal region of Rne and to RhlB.

The protein localises to the cytoplasm. Functionally, globally modulates RNA abundance by binding to RNase E (Rne) and regulating its endonucleolytic activity. Can modulate Rne action in a substrate-dependent manner by altering the composition of the degradosome. Modulates RNA-binding and helicase activities of the degradosome. The chain is Regulator of ribonuclease activity A from Shigella dysenteriae serotype 1 (strain Sd197).